The chain runs to 67 residues: Conotoxin reg3.8 (67 aa).

A signal peptide spans 1–22 (MMSKLGVLLTICLLLFPLSVLP). A propeptide spanning residues 23–50 (LDGDQLADQPARHAQSAERNARFHPVKR) is cleaved from the precursor. Disulfide bonds link cysteine 51-cysteine 65, cysteine 52-cysteine 63, and cysteine 57-cysteine 66. Cysteine 66 carries the cysteine amide modification.

It belongs to the conotoxin M superfamily. Expressed by the venom duct.

The protein localises to the secreted. The protein is Conotoxin reg3.8 of Conus regius (Crown cone).